Reading from the N-terminus, the 329-residue chain is Ornithine carbamoyltransferase (329 aa).

Carbamoyl phosphate is bound by residues 51-54 (STRT), Q78, R102, and 129-132 (HPVQ). L-ornithine contacts are provided by residues N174, D238, and 242 to 243 (SM). Carbamoyl phosphate contacts are provided by residues 278 to 279 (CL) and R306.

This sequence belongs to the aspartate/ornithine carbamoyltransferase superfamily. OTCase family.

Its subcellular location is the cytoplasm. It carries out the reaction carbamoyl phosphate + L-ornithine = L-citrulline + phosphate + H(+). It functions in the pathway amino-acid biosynthesis; L-arginine biosynthesis; L-arginine from L-ornithine and carbamoyl phosphate: step 1/3. Its function is as follows. Reversibly catalyzes the transfer of the carbamoyl group from carbamoyl phosphate (CP) to the N(epsilon) atom of ornithine (ORN) to produce L-citrulline. The polypeptide is Ornithine carbamoyltransferase (Helicobacter hepaticus (strain ATCC 51449 / 3B1)).